A 291-amino-acid chain; its full sequence is Phosphoribulokinase (291 aa).

12–20 (GSSGAGTTS) is an ATP binding site.

The protein belongs to the phosphoribulokinase family. Homooctamer.

The catalysed reaction is D-ribulose 5-phosphate + ATP = D-ribulose 1,5-bisphosphate + ADP + H(+). Its pathway is carbohydrate biosynthesis; Calvin cycle. This chain is Phosphoribulokinase (cbbP), found in Xanthobacter flavus.